A 105-amino-acid chain; its full sequence is Guanidinium exporter (105 aa).

The helical transmembrane segment at 1 to 21 (MSWIILVIAGLLEVVWAVGLK) threads the bilayer. Over 22-28 (YTHGFSR) the chain is Cytoplasmic. A helical membrane pass occupies residues 29–49 (LTPSVITVTAMIVSLALLAWA). Topologically, residues 50–57 (MKSLPVGT) are periplasmic. A helical membrane pass occupies residues 58 to 78 (AYAVWTGIGAVGAAITGIVLL). Residues 79–81 (GES) are Cytoplasmic-facing. The helical transmembrane segment at 82–102 (ANPMRLASLALIVLGIIGLKL) threads the bilayer. Topologically, residues 103–105 (STH) are periplasmic.

Belongs to the drug/metabolite transporter (DMT) superfamily. Small multidrug resistance (SMR) (TC 2.A.7.1) family. Gdx/SugE subfamily.

The protein resides in the cell inner membrane. Its function is as follows. Guanidinium ion exporter. Couples guanidinium export to the proton motive force, exchanging one guanidinium ion for two protons. The sequence is that of Guanidinium exporter from Escherichia coli O6:H1 (strain CFT073 / ATCC 700928 / UPEC).